Consider the following 122-residue polypeptide: Small ribosomal subunit protein bS16 (122 aa).

It belongs to the bacterial ribosomal protein bS16 family.

The polypeptide is Small ribosomal subunit protein bS16 (Prochlorococcus marinus (strain MIT 9313)).